The following is a 494-amino-acid chain: 4-hydroxyphenylacetate 3-monooxygenase oxygenase component (494 aa).

Substrate-binding positions include 103 to 107 and His-149; that span reads RSPDY. FAD is bound by residues 149 to 151, 155 to 158, and Thr-192; these read HTL and QMNR. 205–206 contacts substrate; sequence ST. FAD is bound at residue 455–458; it reads DPVR.

It belongs to the FADH(2)-utilizing monooxygenase family. As to quaternary structure, 4-HPA 3-monooxygenase consists of a reductase component HpaI and an oxygenase component HpaH.

The enzyme catalyses 4-hydroxyphenylacetate + FADH2 + O2 = 3,4-dihydroxyphenylacetate + FAD + H2O + H(+). The protein operates within aromatic compound metabolism; 4-hydroxyphenylacetate degradation; pyruvate and succinate semialdehyde from 4-hydroxyphenylacetate: step 1/7. Utilizes FADH(2) supplied by HpaI, to catalyze the hydroxylation of 4-hydroxyphenylacetic acid, leading to the production of 3,4-dihydroxyphenylacetic acid (DHPA). This is 4-hydroxyphenylacetate 3-monooxygenase oxygenase component (hpaH) from Geobacillus sp. (strain PA-9).